Consider the following 468-residue polypeptide: Phosphatidylinositol-binding clathrin assembly protein LAP (468 aa).

The 143-residue stretch at 16–158 (RHSLAGQGLA…LSYRAMAFDF (143 aa)) folds into the ENTH domain. The disordered stretch occupies residues 438–468 (NAGDGTAKYDGGAGSSPFDWGATDDDGGAAQ). Over residues 459–468 (ATDDDGGAAQ) the composition is skewed to acidic residues.

This sequence belongs to the PICALM/SNAP91 family. Binds clathrin and phosphatidylinositol 4,5-bisphosphate. As to expression, in embryos, expression is seen in central and peripheral nervous systems (brain and ventral nerve cord) and Garland cells. Coexpressed with clathrin at presynaptic boutons of neuromuscular junctions.

Its subcellular location is the membrane. It localises to the clathrin-coated pit. The protein localises to the golgi apparatus. It is found in the cytoplasmic vesicle. The protein resides in the clathrin-coated vesicle. Functionally, assembly protein recruiting clathrin and adaptor protein complex 2 (AP2) to cell membranes at sites of coated-pit formation and clathrin-vesicle assembly. May be required to determine the amount of membrane to be recycled, possibly by regulating the size of the clathrin cage. Involved in AP2-dependent clathrin-mediated endocytosis at the neuromuscular junction. This chain is Phosphatidylinositol-binding clathrin assembly protein LAP (lap), found in Drosophila melanogaster (Fruit fly).